A 336-amino-acid polypeptide reads, in one-letter code: Ketol-acid reductoisomerase (NADP(+)) (336 aa).

Positions alanine 3 to threonine 183 constitute a KARI N-terminal Rossmann domain. NADP(+) is bound by residues tyrosine 26–glutamine 29, arginine 49, serine 52, serine 54, and aspartate 84–glutamine 87. Histidine 109 is a catalytic residue. Glycine 135 is an NADP(+) binding site. A KARI C-terminal knotted domain is found at threonine 184–isoleucine 329. The Mg(2+) site is built by aspartate 192, glutamate 196, glutamate 228, and glutamate 232. Serine 253 is a substrate binding site.

Belongs to the ketol-acid reductoisomerase family. The cofactor is Mg(2+).

It carries out the reaction (2R)-2,3-dihydroxy-3-methylbutanoate + NADP(+) = (2S)-2-acetolactate + NADPH + H(+). The catalysed reaction is (2R,3R)-2,3-dihydroxy-3-methylpentanoate + NADP(+) = (S)-2-ethyl-2-hydroxy-3-oxobutanoate + NADPH + H(+). It participates in amino-acid biosynthesis; L-isoleucine biosynthesis; L-isoleucine from 2-oxobutanoate: step 2/4. Its pathway is amino-acid biosynthesis; L-valine biosynthesis; L-valine from pyruvate: step 2/4. Functionally, involved in the biosynthesis of branched-chain amino acids (BCAA). Catalyzes an alkyl-migration followed by a ketol-acid reduction of (S)-2-acetolactate (S2AL) to yield (R)-2,3-dihydroxy-isovalerate. In the isomerase reaction, S2AL is rearranged via a Mg-dependent methyl migration to produce 3-hydroxy-3-methyl-2-ketobutyrate (HMKB). In the reductase reaction, this 2-ketoacid undergoes a metal-dependent reduction by NADPH to yield (R)-2,3-dihydroxy-isovalerate. The protein is Ketol-acid reductoisomerase (NADP(+)) of Deinococcus geothermalis (strain DSM 11300 / CIP 105573 / AG-3a).